Reading from the N-terminus, the 148-residue chain is CASP-like protein 1 (148 aa).

Helical transmembrane passes span 31–51, 74–94, and 121–141; these read FIYFVAAFSVAGLYSIITSLL, VLLLGIVAAAIGAAGGVGYIG, and IAAGLIASIVLVLLILLSFFT.

It belongs to the Casparian strip membrane proteins (CASP) family. As to quaternary structure, homodimer and heterodimers.

Its subcellular location is the cell membrane. The protein is CASP-like protein 1 of Panax ginseng (Korean ginseng).